An 88-amino-acid polypeptide reads, in one-letter code: Small ribosomal subunit protein uS15 (88 aa).

A disordered region spans residues 1–23 (MIASSVKAEVVKSNARSANDTGS). Residues 14 to 23 (NARSANDTGS) are compositionally biased toward polar residues.

Belongs to the universal ribosomal protein uS15 family. In terms of assembly, part of the 30S ribosomal subunit. Forms a bridge to the 50S subunit in the 70S ribosome, contacting the 23S rRNA.

Its function is as follows. One of the primary rRNA binding proteins, it binds directly to 16S rRNA where it helps nucleate assembly of the platform of the 30S subunit by binding and bridging several RNA helices of the 16S rRNA. Functionally, forms an intersubunit bridge (bridge B4) with the 23S rRNA of the 50S subunit in the ribosome. The polypeptide is Small ribosomal subunit protein uS15 (Delftia acidovorans (strain DSM 14801 / SPH-1)).